The primary structure comprises 117 residues: Toxin CSTX-12 (117 aa).

The signal sequence occupies residues 1–20 (MKVLVICAVLFLTIFSNSSA). Residues 21-47 (ETEDDFLEDESFEADDVIPFLAREQVR) constitute a propeptide that is removed on maturation. 4 cysteine pairs are disulfide-bonded: C50/C65, C57/C74, C64/C95, and C76/C93. A propeptide spanning residues 82–87 (RSDTAR) is cleaved from the precursor. A116 carries the post-translational modification Alanine amide.

This sequence belongs to the neurotoxin 19 (CSTX) family. 12 subfamily. As to quaternary structure, heterodimer of A and B chains; disulfide-linked. Interacts with CSTX-1 (AC P81694), and with CSTX-9 (AC P58604). Expressed by the venom gland.

The protein resides in the secreted. It localises to the target cell membrane. In terms of biological role, synergistic toxin that induces or increases a cytolytic effect when combined with CSTX-1 (AC P81694) or CSTX-9 (AC P58604). When alone, has a weak insecticidal activity, with an unknown molecular target. This Cupiennius salei (American wandering spider) protein is Toxin CSTX-12.